Reading from the N-terminus, the 161-residue chain is Lectin-like protein EP153R (161 aa).

The Cytoplasmic segment spans residues 1–30 (MFSNKKYIGLIDKYCEKKILDDSSTIKICY). The chain crosses the membrane as a helical span at residues 31 to 51 (ILIGILIGTNMITLIYNFIFW). Over 52 to 161 (ENYITCNQKD…HVSLLYICSK (110 aa)) the chain is Extracellular. Cysteine 66 and cysteine 77 are oxidised to a cystine. Residues 66–160 (CPKDWVGYNN…KHVSLLYICS (95 aa)) form a lectin-like region. Asparagine 89, asparagine 98, asparagine 104, asparagine 110, asparagine 116, asparagine 130, and asparagine 136 each carry an N-linked (GlcNAc...) asparagine; by host glycan. A disulfide bridge links cysteine 94 with cysteine 159.

It belongs to the asfivirus lectin-like protein family. In terms of assembly, homodimer.

It localises to the host endoplasmic reticulum membrane. Functionally, down-regulates MHC-I expression by impairing the appropriate configuration or presentation into the plasma membrane of the latter. Participates in viral hemadsorption, which may help viral spread. Reduces the transactivating activity of host TP53, thus inhibiting apoptosis. Non-essential for virus growth in swine macrophage cell cultures. This African swine fever virus (isolate Tick/Malawi/Lil 20-1/1983) (ASFV) protein is Lectin-like protein EP153R.